A 195-amino-acid polypeptide reads, in one-letter code: Large ribosomal subunit protein bL27c (195 aa).

Residues 1–60 (MASMAFTLVGAFKGMSLSSPCHSSSSASFLRADRVSLSVGGGVGMGVPMTMPVRRLTIQM) constitute a chloroplast transit peptide.

Belongs to the bacterial ribosomal protein bL27 family. In terms of assembly, part of the 50S ribosomal subunit.

It is found in the plastid. The protein resides in the chloroplast. The protein is Large ribosomal subunit protein bL27c (RPL27) of Oryza sativa subsp. japonica (Rice).